Reading from the N-terminus, the 417-residue chain is Serine/threonine-protein kinase SBK1 (417 aa).

The Protein kinase domain maps to 53–318 (YELVRELGKG…VFRFLKHELT (266 aa)). Residues 59–67 (LGKGTYGKV) and Lys-82 each bind ATP. Asp-174 serves as the catalytic Proton acceptor. The tract at residues 321 to 405 (LRRRPSHRAR…TDGRTDKSKG (85 aa)) is disordered. The segment covering 363-382 (PSPPSVGPVVPVPVPVPVPV) has biased composition (pro residues).

It belongs to the protein kinase superfamily. Ser/Thr protein kinase family.

It is found in the cytoplasm. It carries out the reaction L-seryl-[protein] + ATP = O-phospho-L-seryl-[protein] + ADP + H(+). It catalyses the reaction L-threonyl-[protein] + ATP = O-phospho-L-threonyl-[protein] + ADP + H(+). Functionally, may be involved in signal-transduction pathways related to the control of brain development. This chain is Serine/threonine-protein kinase SBK1 (Sbk1), found in Mus musculus (Mouse).